A 431-amino-acid polypeptide reads, in one-letter code: Tyrosine--tRNA ligase (431 aa).

Tyrosine 34 is a binding site for L-tyrosine. Positions 39–48 (PTADSLHIGH) match the 'HIGH' region motif. The L-tyrosine site is built by tyrosine 171 and glutamine 175. The 'KMSKS' region signature appears at 231–235 (KFGKT). Lysine 234 contributes to the ATP binding site. In terms of domain architecture, S4 RNA-binding spans 353 to 422 (INVVEALVKT…GKYTILRRGK (70 aa)).

This sequence belongs to the class-I aminoacyl-tRNA synthetase family. TyrS type 1 subfamily. As to quaternary structure, homodimer.

It is found in the cytoplasm. It catalyses the reaction tRNA(Tyr) + L-tyrosine + ATP = L-tyrosyl-tRNA(Tyr) + AMP + diphosphate + H(+). In terms of biological role, catalyzes the attachment of tyrosine to tRNA(Tyr) in a two-step reaction: tyrosine is first activated by ATP to form Tyr-AMP and then transferred to the acceptor end of tRNA(Tyr). The protein is Tyrosine--tRNA ligase of Neisseria meningitidis serogroup A / serotype 4A (strain DSM 15465 / Z2491).